The following is a 183-amino-acid chain: Pyruvoyl-dependent arginine decarboxylase 2 (183 aa).

A Pyruvic acid (Ser) modification is found at Ser41.

Belongs to the PdaD family. Pyruvate is required as a cofactor.

It catalyses the reaction L-arginine + H(+) = agmatine + CO2. The polypeptide is Pyruvoyl-dependent arginine decarboxylase 2 (pdaD2) (Methanosarcina mazei (strain ATCC BAA-159 / DSM 3647 / Goe1 / Go1 / JCM 11833 / OCM 88) (Methanosarcina frisia)).